Consider the following 422-residue polypeptide: Proton-gated ion channel subunit pbo-6 (422 aa).

A signal peptide spans 1-20; the sequence is MQCSFLTIFIFITTVTVGVA. The Extracellular portion of the chain corresponds to 21–233; it reads EFSEQYQGSS…IKVARKPFYY (213 aa). Cysteine 151 and cysteine 165 form a disulfide bridge. 3 helical membrane passes run 234 to 254, 268 to 288, and 294 to 314; these read LISL…GLFA, LGVT…EKVP, and VPLL…ATIL. At 315–378 the chain is on the cytoplasmic side; that stretch reads TSTVMRVHAK…GEVSRRMDYL (64 aa). The helical transmembrane segment at 379 to 399 threads the bilayer; sequence LASVFIIIISTPTLYLFYMCF.

The protein belongs to the ligand-gated ion channel (TC 1.A.9) family. Acetylcholine receptor (TC 1.A.9.1) subfamily. In terms of assembly, the functional channel is a hetero-oligomer of pbo-5 and pbo-6. Expressed in the posterior body muscles.

The protein resides in the membrane. In terms of biological role, forms a proton-gated ion channel with pbo-5 that is activated by acidification of the posterior coelomic space, leading to posterior body wall muscle contraction (pBoc) during the defecation cycle. Not necessary for stimulation of posterior body contraction (pBoc). Does not bind neurotransmitters such as acetylcholine, gamma-aminobutyric acid, glycine, serotonin, glutamate or choline. The protein is Proton-gated ion channel subunit pbo-6 of Caenorhabditis elegans.